The primary structure comprises 357 residues: Peptide chain release factor 1 (357 aa).

At Q234 the chain carries N5-methylglutamine. The segment at 249–308 (PSGVEVSCQDEKSQHKNRSKAMRVLRSRVYEKKREEQQAEREEARRSMVGSGDRSAKIRT) is disordered. Positions 263 to 274 (HKNRSKAMRVLR) are enriched in basic residues. Positions 276–294 (RVYEKKREEQQAEREEARR) are enriched in basic and acidic residues.

It belongs to the prokaryotic/mitochondrial release factor family. In terms of processing, methylated by PrmC. Methylation increases the termination efficiency of RF1.

It is found in the cytoplasm. Its function is as follows. Peptide chain release factor 1 directs the termination of translation in response to the peptide chain termination codons UAG and UAA. This chain is Peptide chain release factor 1, found in Salinibacter ruber (strain DSM 13855 / M31).